The primary structure comprises 329 residues: Biotin synthase (329 aa).

Positions 48–278 (FVGDKVFLCS…TKRISICGGR (231 aa)) constitute a Radical SAM core domain. [4Fe-4S] cluster contacts are provided by C66, C70, and C73. Residues S143 and C203 each contribute to the [2Fe-2S] cluster site.

It belongs to the radical SAM superfamily. Biotin synthase family. As to quaternary structure, homodimer. [4Fe-4S] cluster is required as a cofactor. Requires [2Fe-2S] cluster as cofactor.

It carries out the reaction (4R,5S)-dethiobiotin + (sulfur carrier)-SH + 2 reduced [2Fe-2S]-[ferredoxin] + 2 S-adenosyl-L-methionine = (sulfur carrier)-H + biotin + 2 5'-deoxyadenosine + 2 L-methionine + 2 oxidized [2Fe-2S]-[ferredoxin]. Its pathway is cofactor biosynthesis; biotin biosynthesis; biotin from 7,8-diaminononanoate: step 2/2. Catalyzes the conversion of dethiobiotin (DTB) to biotin by the insertion of a sulfur atom into dethiobiotin via a radical-based mechanism. In Geotalea daltonii (strain DSM 22248 / JCM 15807 / FRC-32) (Geobacter daltonii), this protein is Biotin synthase.